The sequence spans 173 residues: Trafficking regulator of GLUT4 1 (173 aa).

Polar residues predominate over residues 1–17; it reads MANPVQPQLQDPGSTSP. A disordered region spans residues 1-22; it reads MANPVQPQLQDPGSTSPLDLPE. At 1-102 the chain is on the cytoplasmic side; that stretch reads MANPVQPQLQ…QDQEAPKDYL (102 aa). Phosphoserine is present on residues S16, S43, S45, S70, S84, and S85. The helical intramembrane region spans 103–123; sequence VLAIASCFCPVWPLNLIPLIF. At 124–150 the chain is on the cytoplasmic side; that stretch reads SIMSRSSVQQGDLDGARRLGRLARLLS. A helical transmembrane segment spans residues 151-171; it reads ITFIILGIVIIIVAVTVNFTV. Topologically, residues 172-173 are extracellular; that stretch reads PK.

The protein belongs to the CD225/Dispanin family. In terms of assembly, interacts with SLC2A4; the interaction is required for proper SLC2A4 reacycling after insulin stimulation. Present in adipose tissue and undetectable in other tissues (at protein level).

It localises to the cell membrane. The protein localises to the endomembrane system. The protein resides in the cytoplasm. Its subcellular location is the perinuclear region. Functionally, regulates insulin-mediated adipose tissue glucose uptake and transport by modulation of SLC2A4 recycling. Not required for SLC2A4 membrane fusion upon an initial stimulus, but rather is necessary for proper protein recycling during prolonged insulin stimulation. The polypeptide is Trafficking regulator of GLUT4 1 (Rattus norvegicus (Rat)).